Reading from the N-terminus, the 526-residue chain is Transcription factor MYC1 (526 aa).

Positions 330 to 351 are disordered; it reads MFPSQNSGLNQDDPSDRRKENE. Residues 332–341 show a composition bias toward polar residues; the sequence is PSQNSGLNQD. Positions 333 to 382 constitute a bHLH domain; sequence SQNSGLNQDDPSDRRKENEKFSVLRTMVPTVNEVDKESILNNTIKYLQEL.

Homodimer. Interacts with MYB75/PAP1, MYB90/PAP2, MYB4, MYB5, MYB6, MYB23, MYB82, MYB113, MYB114, TT2, MYB0/GL1, and MYB66/WER. In terms of tissue distribution, mostly expressed in developing seeds. Also detected in stems and leaves.

The protein resides in the nucleus. Trancsription activator, when associated with MYB75/PAP1 or MYB90/PAP2. The protein is Transcription factor MYC1 (BHLH12) of Arabidopsis thaliana (Mouse-ear cress).